We begin with the raw amino-acid sequence, 60 residues long: Large ribosomal subunit protein uL30 (60 aa).

This sequence belongs to the universal ribosomal protein uL30 family. In terms of assembly, part of the 50S ribosomal subunit.

In Paracidovorax citrulli (strain AAC00-1) (Acidovorax citrulli), this protein is Large ribosomal subunit protein uL30.